The following is an 89-amino-acid chain: Putative regulatory protein CPE1749 (89 aa).

The protein belongs to the RemA family.

This is Putative regulatory protein CPE1749 from Clostridium perfringens (strain 13 / Type A).